The primary structure comprises 1325 residues: Nucleoporin nup146 (1325 aa).

Disordered stretches follow at residues 1–20, 453–474, 758–951, and 973–994; these read MNAE…AGGS, VRAS…FVKN, GEGL…PKIH, and FPKQ…QESL. Positions 763–778 are enriched in polar residues; the sequence is QQKTSKALPSTGITKL. Basic and acidic residues predominate over residues 779–791; the sequence is SENDNEKAEESNE. Residues 792 to 801 show a composition bias toward polar residues; that stretch reads TKGFNTTIAK. Basic and acidic residues predominate over residues 802-811; sequence QNDKSSKSEG. 2 stretches are compositionally biased toward polar residues: residues 816–835 and 850–861; these read ANMS…SKPS and FTFNKPSETPPF. A compositionally biased stretch (basic and acidic residues) spans 867-881; the sequence is LVEKESKQDVSDTSD. Phosphothreonine is present on T899. Residues 927–937 show a composition bias toward acidic residues; sequence SEIEDQDEESS. The residue at position 946 (T946) is a Phosphothreonine. A phosphoserine mark is found at S1041, S1043, and S1044.

The protein resides in the cytoplasm. Its subcellular location is the nucleus. Its function is as follows. Functions as a component of the nuclear pore complex (NPC). NPC components, collectively referred to as nucleoporins (NUPs), can play the role of both NPC structural components and of docking or interaction partners for transiently associated nuclear transport factors. Active directional transport is assured by both, a Phe-Gly (FG) repeat affinity gradient for these transport factors across the NPC and a transport cofactor concentration gradient across the nuclear envelope. The protein is Nucleoporin nup146 (nup146) of Schizosaccharomyces pombe (strain 972 / ATCC 24843) (Fission yeast).